The sequence spans 174 residues: NAD(P)H-quinone oxidoreductase subunit J, chloroplastic (174 aa).

It belongs to the complex I 30 kDa subunit family. In terms of assembly, NDH is composed of at least 16 different subunits, 5 of which are encoded in the nucleus.

The protein resides in the plastid. It is found in the chloroplast thylakoid membrane. The catalysed reaction is a plastoquinone + NADH + (n+1) H(+)(in) = a plastoquinol + NAD(+) + n H(+)(out). It carries out the reaction a plastoquinone + NADPH + (n+1) H(+)(in) = a plastoquinol + NADP(+) + n H(+)(out). In terms of biological role, NDH shuttles electrons from NAD(P)H:plastoquinone, via FMN and iron-sulfur (Fe-S) centers, to quinones in the photosynthetic chain and possibly in a chloroplast respiratory chain. The immediate electron acceptor for the enzyme in this species is believed to be plastoquinone. Couples the redox reaction to proton translocation, and thus conserves the redox energy in a proton gradient. This is NAD(P)H-quinone oxidoreductase subunit J, chloroplastic from Mesostigma viride (Green alga).